A 116-amino-acid polypeptide reads, in one-letter code: Ribonuclease P protein component (116 aa).

Belongs to the RnpA family. Consists of a catalytic RNA component (M1 or rnpB) and a protein subunit.

The catalysed reaction is Endonucleolytic cleavage of RNA, removing 5'-extranucleotides from tRNA precursor.. Functionally, RNaseP catalyzes the removal of the 5'-leader sequence from pre-tRNA to produce the mature 5'-terminus. It can also cleave other RNA substrates such as 4.5S RNA. The protein component plays an auxiliary but essential role in vivo by binding to the 5'-leader sequence and broadening the substrate specificity of the ribozyme. The protein is Ribonuclease P protein component of Pseudanabaena sp. (strain PCC 6903).